We begin with the raw amino-acid sequence, 363 residues long: Protein RecA (363 aa).

ATP is bound at residue G79–T86.

The protein belongs to the RecA family.

Its subcellular location is the cytoplasm. Its function is as follows. Can catalyze the hydrolysis of ATP in the presence of single-stranded DNA, the ATP-dependent uptake of single-stranded DNA by duplex DNA, and the ATP-dependent hybridization of homologous single-stranded DNAs. It interacts with LexA causing its activation and leading to its autocatalytic cleavage. This is Protein RecA from Methylobacterium sp. (strain 4-46).